The chain runs to 286 residues: NAD(P)H azoreductase (286 aa).

Residues 6–11 (GGTGTI), Arg-31, and 136–141 (GFFMQN) contribute to the NADP(+) site.

Belongs to the NmrA-type oxidoreductase family. Azoreductase type 3 subfamily. As to quaternary structure, monomer.

In terms of biological role, catalyzes the reductive cleavage of azo bond in aromatic azo compounds to the corresponding amines. Uses preferentially NADPH rather than NADH as an electron donor for its activity. The enzyme reductively cleaved Orange II and carboxy-Orange II, and can also reduce several sulfonated structural analogs, which carry a hydroxy group in the 2 position of the naphthol ring. The chain is NAD(P)H azoreductase (azoB) from Xenophilus azovorans.